The primary structure comprises 359 residues: Gene 58 protein (359 aa).

The next 11 membrane-spanning stretches (helical) occupy residues T12–F32, V45–F65, Y75–Q95, Y103–F123, Y132–L152, F154–L174, L220–Y240, V246–Y266, A271–L289, S296–L318, and I330–Y350.

It belongs to the herpesviridae BMRF2 family.

It localises to the host membrane. The sequence is that of Gene 58 protein (58) from Equine herpesvirus 2 (strain 86/87) (EHV-2).